Consider the following 199-residue polypeptide: dITP/XTP pyrophosphatase (199 aa).

S8–K13 provides a ligand contact to substrate. D69 functions as the Proton acceptor in the catalytic mechanism. D69 contacts Mg(2+). Residues S70, F154–N157, K177, and H182–R183 contribute to the substrate site.

This sequence belongs to the HAM1 NTPase family. As to quaternary structure, homodimer. Mg(2+) is required as a cofactor.

It carries out the reaction XTP + H2O = XMP + diphosphate + H(+). The catalysed reaction is dITP + H2O = dIMP + diphosphate + H(+). The enzyme catalyses ITP + H2O = IMP + diphosphate + H(+). In terms of biological role, pyrophosphatase that catalyzes the hydrolysis of nucleoside triphosphates to their monophosphate derivatives, with a high preference for the non-canonical purine nucleotides XTP (xanthosine triphosphate), dITP (deoxyinosine triphosphate) and ITP. Seems to function as a house-cleaning enzyme that removes non-canonical purine nucleotides from the nucleotide pool, thus preventing their incorporation into DNA/RNA and avoiding chromosomal lesions. The sequence is that of dITP/XTP pyrophosphatase from Xanthomonas campestris pv. campestris (strain 8004).